The sequence spans 564 residues: Dihydroxy-acid dehydratase (564 aa).

Asp-80 provides a ligand contact to Mg(2+). Cys-121 serves as a coordination point for [2Fe-2S] cluster. Mg(2+)-binding residues include Asp-122 and Lys-123. Lys-123 is subject to N6-carboxylysine. [2Fe-2S] cluster is bound at residue Cys-194. A Mg(2+)-binding site is contributed by Glu-447. Ser-473 functions as the Proton acceptor in the catalytic mechanism.

This sequence belongs to the IlvD/Edd family. Homodimer. [2Fe-2S] cluster is required as a cofactor. Mg(2+) serves as cofactor.

It catalyses the reaction (2R)-2,3-dihydroxy-3-methylbutanoate = 3-methyl-2-oxobutanoate + H2O. It carries out the reaction (2R,3R)-2,3-dihydroxy-3-methylpentanoate = (S)-3-methyl-2-oxopentanoate + H2O. The protein operates within amino-acid biosynthesis; L-isoleucine biosynthesis; L-isoleucine from 2-oxobutanoate: step 3/4. Its pathway is amino-acid biosynthesis; L-valine biosynthesis; L-valine from pyruvate: step 3/4. Functionally, functions in the biosynthesis of branched-chain amino acids. Catalyzes the dehydration of (2R,3R)-2,3-dihydroxy-3-methylpentanoate (2,3-dihydroxy-3-methylvalerate) into 2-oxo-3-methylpentanoate (2-oxo-3-methylvalerate) and of (2R)-2,3-dihydroxy-3-methylbutanoate (2,3-dihydroxyisovalerate) into 2-oxo-3-methylbutanoate (2-oxoisovalerate), the penultimate precursor to L-isoleucine and L-valine, respectively. This is Dihydroxy-acid dehydratase from Listeria monocytogenes serotype 4a (strain HCC23).